The chain runs to 258 residues: 2-oxo-tetronate isomerase (258 aa).

Glu-143 functions as the Proton donor/acceptor in the catalytic mechanism. Mg(2+)-binding residues include Glu-143, Asp-178, Gln-204, and Glu-240. Catalysis depends on Glu-240, which acts as the Proton donor/acceptor.

Belongs to the hyi family. OtnI subfamily.

The catalysed reaction is 2-dehydro-L-erythronate = 3-dehydro-L-erythronate. The enzyme catalyses 2-dehydro-D-erythronate = 3-dehydro-D-erythronate. Functionally, catalyzes the isomerization of 2-oxo-tetronate to 3-oxo-tetronate. In Haemophilus influenzae (strain ATCC 51907 / DSM 11121 / KW20 / Rd), this protein is 2-oxo-tetronate isomerase.